The sequence spans 64 residues: Large ribosomal subunit protein uL29 (64 aa).

This sequence belongs to the universal ribosomal protein uL29 family.

This is Large ribosomal subunit protein uL29 from Ralstonia pickettii (strain 12J).